The following is a 427-amino-acid chain: Flotillin-1 (427 aa).

S19, S163, and S385 each carry phosphoserine. T387 is modified (phosphothreonine).

The protein belongs to the band 7/mec-2 family. Flotillin subfamily. As to quaternary structure, heterooligomeric complex of flotillin-1 and flotillin-2 and caveolin-1 and caveolin-2. Interacts with ECPAS.

It is found in the cell membrane. The protein resides in the endosome. Its subcellular location is the membrane. The protein localises to the caveola. It localises to the melanosome. It is found in the membrane raft. Functionally, may act as a scaffolding protein within caveolar membranes, functionally participating in formation of caveolae or caveolae-like vesicles. The sequence is that of Flotillin-1 (FLOT1) from Pongo abelii (Sumatran orangutan).